The sequence spans 344 residues: MDADMIPKFTTKEEEIDFWKALSLKYKKSYKEAQEELLEFQEGSRELETELETQLGQAEHRIRDLQADNQRLQHELDSLKEKLEYQYAQSYKQISVLEDDLSQTRGIKEQLHKYVRELEQANDDLERAKRATITSLEDFEQRLNQAIERNAFLESELDEKESLLVSVQRLKDEARDLRQELAVRDTRSEVTRMSAPSSPTPDNDKTDSAVQASLSLPATPLSKNLDNAFTSQTVLANGSTNAALTPSARISALNIVGDLLRKVGALESKLAACRNFAKDQAARKNYVTNVNGNLINGDISNYSHSLHTSYFDKARTVNGLDPGDGTHITAPPRSNSPSGLVLSV.

Residues 26–187 (YKKSYKEAQE…RQELAVRDTR (162 aa)) are a coiled coil. A compositionally biased stretch (basic and acidic residues) spans 181–190 (LAVRDTRSEV). Disordered regions lie at residues 181–209 (LAVR…TDSA) and 322–344 (PGDG…VLSV).

The protein belongs to the nudE family. Post-translationally, phosphorylated in mitosis.

Its subcellular location is the cytoplasm. It localises to the cytoskeleton. The protein resides in the microtubule organizing center. The protein localises to the centrosome. It is found in the spindle. Functionally, required for organization of the cellular microtubule array and microtubule anchoring at the centrosome. Positively regulates the activity of the minus-end directed microtubule motor protein dynein. May enhance dynein-mediated microtubule sliding by targeting dynein to the microtubule plus end. In Danio rerio (Zebrafish), this protein is Nuclear distribution protein nudE-like 1-A (ndel1a).